The chain runs to 130 residues: Small ribosomal subunit protein uS9 (130 aa).

The protein belongs to the universal ribosomal protein uS9 family.

The chain is Small ribosomal subunit protein uS9 from Vibrio atlanticus (strain LGP32) (Vibrio splendidus (strain Mel32)).